The chain runs to 46 residues: Antimicrobial peptide eNAP-2 (46 aa).

In terms of domain architecture, WAP spans 12 to 46 (RPGRCPTVPPGTFGHCACLCTGDASEPKGQKCCSN).

In terms of biological role, has antibiotic activity against several equine uterine pathogens; S.zooepidemicus, E.coli and P.aeruginosa. Highly efficient against S.zoopedemicus. Not active against K.pneumoniae. Selectively inactivates microbial serine proteases (subtilisin A and proteinase K) without inhibiting mammalian serine proteases (human neutrophil elastase, human cathepsin G and bovine pancreatic trypsin). The polypeptide is Antimicrobial peptide eNAP-2 (Equus caballus (Horse)).